The primary structure comprises 177 residues: Large ribosomal subunit protein uL6 (177 aa).

The protein belongs to the universal ribosomal protein uL6 family. In terms of assembly, part of the 50S ribosomal subunit.

Its function is as follows. This protein binds to the 23S rRNA, and is important in its secondary structure. It is located near the subunit interface in the base of the L7/L12 stalk, and near the tRNA binding site of the peptidyltransferase center. The chain is Large ribosomal subunit protein uL6 from Hydrogenovibrio crunogenus (strain DSM 25203 / XCL-2) (Thiomicrospira crunogena).